A 131-amino-acid polypeptide reads, in one-letter code: uncharacterized protein (131 aa).

This is an uncharacterized protein from Saccharomyces cerevisiae (strain ATCC 204508 / S288c) (Baker's yeast).